The primary structure comprises 217 residues: Kunitz-type trypsin inhibitor-like 2 protein (217 aa).

Positions 1-26 are cleaved as a signal peptide; it reads MKPLSPLTLSFLLFVFITTLSLAFSN. Cystine bridges form between Cys70–Cys115 and Cys168–Cys175. N-linked (GlcNAc...) asparagine glycosylation occurs at Asn191.

It belongs to the protease inhibitor I3 (leguminous Kunitz-type inhibitor) family.

The protein localises to the secreted. Might act as a protease inhibitor involved in plant defense responses. The chain is Kunitz-type trypsin inhibitor-like 2 protein (PIP20-2) from Pisum sativum (Garden pea).